The primary structure comprises 191 residues: Calcium-activated potassium channel subunit beta-1 (191 aa).

Residues 2-18 (GKKLVMAQRRGETRALC) lie on the Cytoplasmic side of the membrane. The chain crosses the membrane as a helical span at residues 19 to 39 (LGVAMVVGAVITYYILGTTVL). The Extracellular segment spans residues 40-157 (PLYQKSVWTQ…YRRLYGPQSL (118 aa)). 2 N-linked (GlcNAc...) asparagine glycosylation sites follow: Asn80 and Asn142. Residues 158–178 (LFSLFWPTFLLTGGLLIIVMV) traverse the membrane as a helical segment. The Cytoplasmic portion of the chain corresponds to 179 to 191 (KINQSLSILAAQR).

The protein belongs to the KCNMB (TC 8.A.14.1) family. KCNMB1 subfamily. In terms of assembly, interacts with KCNMA1 tetramer. There are probably 4 molecules of KCMNB1 per KCNMA1 tetramer. In terms of processing, N-glycosylated.

Its subcellular location is the membrane. Regulatory subunit of the calcium activated potassium KCNMA1 (maxiK) channel. Modulates the calcium sensitivity and gating kinetics of KCNMA1, thereby contributing to KCNMA1 channel diversity. Increases the apparent Ca(2+)/voltage sensitivity of the KCNMA1 channel. It also modifies KCNMA1 channel kinetics and alters its pharmacological properties. It slows down the activation and the deactivation kinetics of the channel. Acts as a negative regulator of smooth muscle contraction by enhancing the calcium sensitivity to KCNMA1. Its presence is also a requirement for internal binding of the KCNMA1 channel opener dehydrosoyasaponin I (DHS-1) triterpene glycoside and for external binding of the agonist hormone 17-beta-estradiol (E2). Increases the binding activity of charybdotoxin (CTX) toxin to KCNMA1 peptide blocker by increasing the CTX association rate and decreasing the dissociation rate. The sequence is that of Calcium-activated potassium channel subunit beta-1 (KCNMB1) from Bos taurus (Bovine).